The primary structure comprises 567 residues: Lipase maturation factor 1 (567 aa).

Residues 1–39 (MRPDSPTMAAPAESLRRRKTGYSDPEPESPPAPGRGPAG) are disordered. Residues 1–49 (MRPDSPTMAAPAESLRRRKTGYSDPEPESPPAPGRGPAGSPAHLHTGTF) lie on the Cytoplasmic side of the membrane. The chain crosses the membrane as a helical span at residues 50–72 (WLTRIVLLKALAFVYFVAFLVAF). At 73–127 (HQNKQLIGDRGLLPCRVFLKNFQQYFQDRTSWEVFSYMPTILWLMDWSDMNSNLD) the chain is on the lumenal side. The helical transmembrane segment at 128–151 (LLALLGLGISSFVLITGCANMLLM) threads the bilayer. At 152-207 (AALWGLYMSLVNVGHVWYSFGWESQLLETGFLGIFLCPLWTLSRLPQHTPTSRIVL) the chain is on the cytoplasmic side. The helical transmembrane segment at 208-221 (WGFRWLIFRIMLGA) threads the bilayer. At 222-292 (GLIKIRGDRC…LGRRACIIHG (71 aa)) the chain is on the lumenal side. A helical membrane pass occupies residues 293–321 (VLQILFQAVLIVSGNLSFLNWLTMVPSLA). The Cytoplasmic segment spans residues 322-367 (CFDDATLGFLFPSGPGSLKDRVLQMQRDIRGARPEPRFGSVVRRAA). Residues 368 to 388 (NVSLGVLLAWLSVPVVLNLLS) traverse the membrane as a helical segment. Residues 389–567 (SRQVMNTHFN…DRGWPLPGPL (179 aa)) are Lumenal-facing.

This sequence belongs to the lipase maturation factor family. In terms of assembly, interacts with LPL and SEL1L.

It is found in the endoplasmic reticulum membrane. Involved in the maturation of specific proteins in the endoplasmic reticulum. Required for maturation and transport of active lipoprotein lipase (LPL) through the secretory pathway. Each LMF1 molecule chaperones 50 or more molecules of LPL. This chain is Lipase maturation factor 1 (LMF1), found in Homo sapiens (Human).